Consider the following 99-residue polypeptide: CLAVATA3/ESR (CLE)-related protein 41 (99 aa).

Positions 1–34 (MATSNDQTNTKSSHSRTLLLLFIFLSLLLFSSLT) are cleaved as a signal peptide. Residues 60-99 (ASSTMDLRPKASTRRSRTSRRREFGNDAHEVPSGPNPISN) are disordered. Positions 70 to 79 (ASTRRSRTSR) are enriched in basic residues. The span at 80–89 (RREFGNDAHE) shows a compositional bias: basic and acidic residues. Hydroxyproline occurs at positions 91 and 94. P94 is a glycosylation site (O-linked (Ara...) hydroxyproline).

It belongs to the CLV3/ESR signal peptide family. CLE41p interacts specifically with the leucine-rich repeat receptor-like protein kinase TDR. In terms of processing, the O-glycosylation (arabinosylation) of the hydroxyproline Pro-94 enhances binding affinity of the CLE41p peptide for its receptor. Mostly expressed in inflorescence and roots, and, to a lower extent, in seedlings, flowers, leaves and siliques. Observed along the vascular strands in cotyledons, leaves and roots, but not in shoot apical meristems (SAM). Restricted to the phloem and the neighboring pericycle cells in the roots and hypocotyls.

It is found in the secreted. Its subcellular location is the extracellular space. Extracellular signal peptide that regulates cell fate. May act with TDR as a ligand-receptor pair in a signal transduction pathway that represses tracheary element differentiation but promotes the formation of procambial cells adjacent to phloem cells in the veins in an auxin-dependent manner. Regulates the transition of protophloem cells from proliferation to differentiation, thus impinging on postembryonic growth capacity of the root meristem; this signaling pathway requires CRN and CLV2. This is CLAVATA3/ESR (CLE)-related protein 41 from Arabidopsis thaliana (Mouse-ear cress).